The sequence spans 226 residues: UPF0758 protein PSEEN5431 (226 aa).

The MPN domain maps to 102–224 (VMDNPLAVRR…PLSMIEHGWL (123 aa)). Histidine 173, histidine 175, and aspartate 186 together coordinate Zn(2+). The JAMM motif signature appears at 173-186 (HNHPSGNCEPSQDD).

Belongs to the UPF0758 family.

The protein is UPF0758 protein PSEEN5431 of Pseudomonas entomophila (strain L48).